Consider the following 181-residue polypeptide: Endoribonuclease YbeY (181 aa).

Zn(2+) contacts are provided by H140, H144, and H150.

It belongs to the endoribonuclease YbeY family. Zn(2+) serves as cofactor.

Its subcellular location is the cytoplasm. Single strand-specific metallo-endoribonuclease involved in late-stage 70S ribosome quality control and in maturation of the 3' terminus of the 16S rRNA. The chain is Endoribonuclease YbeY from Dinoroseobacter shibae (strain DSM 16493 / NCIMB 14021 / DFL 12).